The chain runs to 172 residues: Putative RNA polymerase II transcriptional coactivator (172 aa).

Disordered stretches follow at residues 1–43 (MPPK…QDGN) and 123–172 (QTDA…DDDE). Polar residues predominate over residues 24–43 (GNTGKAQPQELTKGSDQDGN). The segment covering 131-144 (PKVKALESNKESIK) has biased composition (basic and acidic residues). Acidic residues predominate over residues 158-172 (TSDEEEAAEDEDDDE).

The protein belongs to the transcriptional coactivator PC4 family.

The protein resides in the nucleus. In terms of biological role, general coactivator that functions cooperatively with TAFs and mediates functional interactions between upstream activators and the general transcriptional machinery. Binds single-stranded DNA. The polypeptide is Putative RNA polymerase II transcriptional coactivator (Neurospora crassa (strain ATCC 24698 / 74-OR23-1A / CBS 708.71 / DSM 1257 / FGSC 987)).